The sequence spans 475 residues: uncharacterized protein (475 aa).

A helical membrane pass occupies residues 19-39; sequence LVSAILILSILIWLIITIFFA.

The protein localises to the membrane. This is an uncharacterized protein from Mycoplasma pneumoniae (strain ATCC 29342 / M129 / Subtype 1) (Mycoplasmoides pneumoniae).